The chain runs to 232 residues: UPF0502 protein mma_2112 (232 aa).

This sequence belongs to the UPF0502 family.

The protein is UPF0502 protein mma_2112 of Janthinobacterium sp. (strain Marseille) (Minibacterium massiliensis).